We begin with the raw amino-acid sequence, 521 residues long: Acidic amino acid decarboxylase GADL1 (521 aa).

The residue at position 333 (K333) is an N6-(pyridoxal phosphate)lysine.

This sequence belongs to the group II decarboxylase family. In terms of assembly, homodimer. Requires pyridoxal 5'-phosphate as cofactor. As to expression, expressed very weakly in neurons and not detected in astrocytes, brain or liver.

It carries out the reaction L-aspartate + H(+) = beta-alanine + CO2. The catalysed reaction is 3-sulfino-L-alanine + H(+) = hypotaurine + CO2. It catalyses the reaction L-cysteate + H(+) = taurine + CO2. Its function is as follows. May catalyze the decarboxylation of L-aspartate, 3-sulfino-L-alanine (cysteine sulfinic acid), and L-cysteate to beta-alanine, hypotaurine and taurine, respectively. Does not exhibit any decarboxylation activity toward glutamate. In Homo sapiens (Human), this protein is Acidic amino acid decarboxylase GADL1 (GADL1).